A 91-amino-acid polypeptide reads, in one-letter code: Small ribosomal subunit protein bS18 (91 aa).

It belongs to the bacterial ribosomal protein bS18 family. Part of the 30S ribosomal subunit. Forms a tight heterodimer with protein bS6.

Binds as a heterodimer with protein bS6 to the central domain of the 16S rRNA, where it helps stabilize the platform of the 30S subunit. The protein is Small ribosomal subunit protein bS18 of Gluconacetobacter diazotrophicus (strain ATCC 49037 / DSM 5601 / CCUG 37298 / CIP 103539 / LMG 7603 / PAl5).